The following is a 156-amino-acid chain: Small ribosomal subunit protein uS7 (156 aa).

The protein belongs to the universal ribosomal protein uS7 family. As to quaternary structure, part of the 30S ribosomal subunit. Contacts proteins S9 and S11.

One of the primary rRNA binding proteins, it binds directly to 16S rRNA where it nucleates assembly of the head domain of the 30S subunit. Is located at the subunit interface close to the decoding center, probably blocks exit of the E-site tRNA. The chain is Small ribosomal subunit protein uS7 from Desulfatibacillum aliphaticivorans.